The sequence spans 259 residues: MTDNDSDVRLAHRLAEIADTLAWEFFGGAPAVRHKSDGSPVSEADLAVEKALLAVLAAERPGDAVLTEESGSLGTRSSRRRWILDPIDGTIPFLAGERGWGTHVALEVDEELRTAVLSRPTERSRWWAVRGRGAFTSVRGEPLSAARPLRIPSAPLPLEAARVGGFLMPDSPVEPVRDRMRWVESSVCLVGDLLEGRVDAVIDEGGHVWDRAPAALLVHEAGGRVDDLRGGGRLDERWLVYAADGVADGLAGLLRDVGA.

It belongs to the inositol monophosphatase superfamily.

It carries out the reaction dTTP + alpha-D-glucose 1-phosphate + H(+) = dTDP-alpha-D-glucose + diphosphate. The protein operates within antibiotic biosynthesis; streptomycin biosynthesis. This Streptomyces griseus protein is Glucose-1-phosphate thymidylyltransferase (strO).